Consider the following 180-residue polypeptide: Adenine phosphoribosyltransferase (180 aa).

The protein belongs to the purine/pyrimidine phosphoribosyltransferase family. In terms of assembly, homodimer.

The protein resides in the cytoplasm. The enzyme catalyses AMP + diphosphate = 5-phospho-alpha-D-ribose 1-diphosphate + adenine. Its pathway is purine metabolism; AMP biosynthesis via salvage pathway; AMP from adenine: step 1/1. Functionally, catalyzes a salvage reaction resulting in the formation of AMP, that is energically less costly than de novo synthesis. In Rhizobium meliloti (strain 1021) (Ensifer meliloti), this protein is Adenine phosphoribosyltransferase.